Here is a 138-residue protein sequence, read N- to C-terminus: Putative phosphatidylinositol 3,4,5-trisphosphate 3-phosphatase TPTE2P1 (138 aa).

Residues 1–75 enclose the C2 tensin-type domain; the sequence is MPAAFPCVFP…FAVEILFGMV (75 aa).

This chain is Putative phosphatidylinositol 3,4,5-trisphosphate 3-phosphatase TPTE2P1 (TPTE2P1), found in Homo sapiens (Human).